Reading from the N-terminus, the 96-residue chain is Aspartyl/glutamyl-tRNA(Asn/Gln) amidotransferase subunit C (96 aa).

Belongs to the GatC family. Heterotrimer of A, B and C subunits.

The catalysed reaction is L-glutamyl-tRNA(Gln) + L-glutamine + ATP + H2O = L-glutaminyl-tRNA(Gln) + L-glutamate + ADP + phosphate + H(+). It carries out the reaction L-aspartyl-tRNA(Asn) + L-glutamine + ATP + H2O = L-asparaginyl-tRNA(Asn) + L-glutamate + ADP + phosphate + 2 H(+). Its function is as follows. Allows the formation of correctly charged Asn-tRNA(Asn) or Gln-tRNA(Gln) through the transamidation of misacylated Asp-tRNA(Asn) or Glu-tRNA(Gln) in organisms which lack either or both of asparaginyl-tRNA or glutaminyl-tRNA synthetases. The reaction takes place in the presence of glutamine and ATP through an activated phospho-Asp-tRNA(Asn) or phospho-Glu-tRNA(Gln). The chain is Aspartyl/glutamyl-tRNA(Asn/Gln) amidotransferase subunit C from Chloroflexus aggregans (strain MD-66 / DSM 9485).